Consider the following 860-residue polypeptide: Nuclear cap-binding protein complex subunit 1 (860 aa).

The MIF4G domain maps to 36–271 (CKDMLPDIRT…SNVKNALAND (236 aa)).

It belongs to the NCBP1 family. In terms of assembly, component of the nuclear cap-binding complex (CBC).

It is found in the nucleus. Component of the cap-binding complex (CBC) involved in the nuclear export of capped U snRNAs. The CBC complex is required for efficient pre-mRNA splicing through efficient commitment complex and spliceosome formation; and involved in rRNA processing at sites A0, A1 and A2. In Eremothecium gossypii (strain ATCC 10895 / CBS 109.51 / FGSC 9923 / NRRL Y-1056) (Yeast), this protein is Nuclear cap-binding protein complex subunit 1 (CBC1).